Here is a 529-residue protein sequence, read N- to C-terminus: Peptide chain release factor 3 (529 aa).

One can recognise a tr-type G domain in the interval 11–280 (SKRRTFAIIS…GLTEWAPAPK (270 aa)). GTP is bound by residues 20 to 27 (SHPDAGKT), 88 to 92 (DTPGH), and 142 to 145 (NKLD).

The protein belongs to the TRAFAC class translation factor GTPase superfamily. Classic translation factor GTPase family. PrfC subfamily.

It is found in the cytoplasm. Functionally, increases the formation of ribosomal termination complexes and stimulates activities of RF-1 and RF-2. It binds guanine nucleotides and has strong preference for UGA stop codons. It may interact directly with the ribosome. The stimulation of RF-1 and RF-2 is significantly reduced by GTP and GDP, but not by GMP. The chain is Peptide chain release factor 3 from Vibrio parahaemolyticus serotype O3:K6 (strain RIMD 2210633).